The sequence spans 275 residues: Large ribosomal subunit protein uL2c (275 aa).

A disordered region spans residues 219 to 254; sequence TVRGSVMNPCDHPHGGGEGRAPIGRTRPLTPWGKPA.

The protein belongs to the universal ribosomal protein uL2 family. As to quaternary structure, part of the 50S ribosomal subunit.

It localises to the plastid. Its subcellular location is the chloroplast. The chain is Large ribosomal subunit protein uL2c (rpl2) from Phaeodactylum tricornutum (strain CCAP 1055/1).